Consider the following 336-residue polypeptide: DNA repair protein RAD51 homolog A (336 aa).

The region spanning 45–74 (TVEAVAYAPKKELLNIKGISEAKAEKILAE) is the HhH domain. Residue 124–131 (GEFRTGKT) participates in ATP binding. The Nuclear export signal motif lies at 242–257 (LARFLRMLLRLADEFG).

It belongs to the RecA family. RAD51 subfamily. Forms linear homooligomers, giving rise to a RAD51 nucleoprotein filament, which is essential for strand-pairing reactions during DNA recombination.

Its subcellular location is the nucleus. The protein resides in the cytoplasm. It is found in the chromosome. Plays an important role in homologous strand exchange, a key step in DNA repair through homologous recombination (HR). Binds to single-stranded DNA in an ATP-dependent manner to form nucleoprotein filaments which are essential for the homology search and strand exchange. Catalyzes the recognition of homology and strand exchange between homologous DNA partners to form a joint molecule between a processed DNA break and the repair template. Recruited to resolve stalled replication forks during replication stress. Also involved in interstrand cross-link repair. The sequence is that of DNA repair protein RAD51 homolog A (rad51-a) from Xenopus laevis (African clawed frog).